Consider the following 490-residue polypeptide: DNA-binding protein D-ETS-3 (490 aa).

Disordered stretches follow at residues 190-255 and 271-294; these read TASS…SGGG and SSTQSQGYSSNALGIKHDPHSQLR. Positions 196–207 are enriched in basic and acidic residues; sequence HVEHKVRADKST. A compositionally biased stretch (low complexity) spans 211–227; the sequence is ATTSSHAAAPSSSSSAS. Residues 244–255 show a composition bias toward gly residues; that stretch reads GTGGGASASGGG. Residues 271–280 show a composition bias toward low complexity; that stretch reads SSTQSQGYSS. The segment at residues 317-397 is a DNA-binding region (ETS); the sequence is IQLWQFLLEL…HGKRYAYKFD (81 aa).

This sequence belongs to the ETS family. In terms of tissue distribution, embryonic ventral nervous system, higher in the thoracic than abdominal segments.

The protein resides in the nucleus. This is DNA-binding protein D-ETS-3 (Ets65A) from Drosophila melanogaster (Fruit fly).